We begin with the raw amino-acid sequence, 239 residues long: Ribonuclease PH (239 aa).

Residues R87 and 125 to 127 (GTR) contribute to the phosphate site.

It belongs to the RNase PH family. In terms of assembly, homohexameric ring arranged as a trimer of dimers.

The enzyme catalyses tRNA(n+1) + phosphate = tRNA(n) + a ribonucleoside 5'-diphosphate. Phosphorolytic 3'-5' exoribonuclease that plays an important role in tRNA 3'-end maturation. Removes nucleotide residues following the 3'-CCA terminus of tRNAs; can also add nucleotides to the ends of RNA molecules by using nucleoside diphosphates as substrates, but this may not be physiologically important. Probably plays a role in initiation of 16S rRNA degradation (leading to ribosome degradation) during starvation. In Acaryochloris marina (strain MBIC 11017), this protein is Ribonuclease PH.